The primary structure comprises 194 residues: Peptidyl-tRNA hydrolase (194 aa).

Tyrosine 17 provides a ligand contact to tRNA. Histidine 22 acts as the Proton acceptor in catalysis. The tRNA site is built by tyrosine 69, asparagine 71, and asparagine 117.

This sequence belongs to the PTH family. As to quaternary structure, monomer.

It is found in the cytoplasm. The enzyme catalyses an N-acyl-L-alpha-aminoacyl-tRNA + H2O = an N-acyl-L-amino acid + a tRNA + H(+). In terms of biological role, hydrolyzes ribosome-free peptidyl-tRNAs (with 1 or more amino acids incorporated), which drop off the ribosome during protein synthesis, or as a result of ribosome stalling. Functionally, catalyzes the release of premature peptidyl moieties from peptidyl-tRNA molecules trapped in stalled 50S ribosomal subunits, and thus maintains levels of free tRNAs and 50S ribosomes. The sequence is that of Peptidyl-tRNA hydrolase from Paenarthrobacter aurescens (strain TC1).